We begin with the raw amino-acid sequence, 250 residues long: MPSIDINCDMGESFGPWVMGQDTELMPHITAANIACGFHAGDPDVMLATVRAAIAADVAIGAHPGLPDLQGFGRRVMAVTPDEVYALTVYQVGALQAIARSQGGRLHHVKTHGALYTLTARDPALADAVARAVADVDPALPIYVANAAIAQATRERGLRAVYEVYADRSYQDDGTLTPRSQPHAMIEDVDQAIAQVKRMVKEGVVRALSGKDVPITADTLCIHGDQPGAALFARRIRAALEAEGIEIRTV.

It belongs to the LamB/PxpA family. As to quaternary structure, forms a complex composed of PxpA, PxpB and PxpC.

The enzyme catalyses 5-oxo-L-proline + ATP + 2 H2O = L-glutamate + ADP + phosphate + H(+). Its function is as follows. Catalyzes the cleavage of 5-oxoproline to form L-glutamate coupled to the hydrolysis of ATP to ADP and inorganic phosphate. This is 5-oxoprolinase subunit A 2 from Bordetella bronchiseptica (strain ATCC BAA-588 / NCTC 13252 / RB50) (Alcaligenes bronchisepticus).